Here is a 636-residue protein sequence, read N- to C-terminus: 1-deoxy-D-xylulose-5-phosphate synthase (636 aa).

Residues His72 and 113–115 contribute to the thiamine diphosphate site; that span reads GHA. Asp144 serves as a coordination point for Mg(2+). Thiamine diphosphate is bound by residues 145–146, Asn174, Tyr287, and Glu370; that span reads GS. Asn174 contacts Mg(2+).

The protein belongs to the transketolase family. DXPS subfamily. Homodimer. It depends on Mg(2+) as a cofactor. The cofactor is thiamine diphosphate.

The catalysed reaction is D-glyceraldehyde 3-phosphate + pyruvate + H(+) = 1-deoxy-D-xylulose 5-phosphate + CO2. The protein operates within metabolic intermediate biosynthesis; 1-deoxy-D-xylulose 5-phosphate biosynthesis; 1-deoxy-D-xylulose 5-phosphate from D-glyceraldehyde 3-phosphate and pyruvate: step 1/1. In terms of biological role, catalyzes the acyloin condensation reaction between C atoms 2 and 3 of pyruvate and glyceraldehyde 3-phosphate to yield 1-deoxy-D-xylulose-5-phosphate (DXP). This chain is 1-deoxy-D-xylulose-5-phosphate synthase, found in Synechococcus sp. (strain ATCC 27144 / PCC 6301 / SAUG 1402/1) (Anacystis nidulans).